A 366-amino-acid chain; its full sequence is Neuropeptide Y receptor type 1 (366 aa).

The Extracellular portion of the chain corresponds to 1-39 (MNFSTYFENLSVPNNISGNITFPISEDCALPLPMIFTLA). N-linked (GlcNAc...) asparagine glycans are attached at residues Asn-2, Asn-9, and Asn-15. Residues 40–60 (LAYGAVIILGLSGNLALIIII) traverse the membrane as a helical segment. Residues 61-82 (LKQKEMRNVTNILIVNLSFSDL) are Cytoplasmic-facing. The chain crosses the membrane as a helical span at residues 83-103 (LATIMCLPFTLIYTLMDHWIF). At 104–111 (GEVMCKLN) the chain is on the extracellular side. Cys-108 and Cys-193 are oxidised to a cystine. Residues 112–132 (EYIQCVSVTVSIFSLVLIAIE) traverse the membrane as a helical segment. At 133 to 149 (RHQLIINPRGWRPNNRH) the chain is on the cytoplasmic side. Residues 150-170 (ACFGITVIWGFAMACSTPLMM) traverse the membrane as a helical segment. Residues 171–203 (YSVLTDEPFKNISLDSYIGKYVCLEDFPEDKFR) are Extracellular-facing. Asn-181 carries an N-linked (GlcNAc...) asparagine glycan. A helical transmembrane segment spans residues 204 to 224 (LSYTTLLFILQYLGPLCFIFV). Topologically, residues 225 to 260 (CYTKIFLRLKRRNNMMDKIRDNKYRSSETKRINIML) are cytoplasmic. The chain crosses the membrane as a helical span at residues 261 to 281 (LSIVVGFALCWLPFFIFNLVF). The Extracellular portion of the chain corresponds to 282-294 (DWNHEAVATCNHN). A helical membrane pass occupies residues 295–315 (LLFLICHLTAMISTCVNPIFY). Residues 316–366 (GFLNKNFQRDLQFFFNFCDFRSREDDYETIAMSTMHTDVSKTSLKQASPIA) lie on the Cytoplasmic side of the membrane. Cys-333 is lipidated: S-palmitoyl cysteine.

It belongs to the G-protein coupled receptor 1 family.

It localises to the cell membrane. Its function is as follows. Receptor for neuropeptide Y and peptide YY. The sequence is that of Neuropeptide Y receptor type 1 (npy1r) from Xenopus laevis (African clawed frog).